Reading from the N-terminus, the 283-residue chain is Demethylrebeccamycin-D-glucose O-methyltransferase (283 aa).

S-adenosyl-L-methionine is bound by residues Ser101, Gln106, 129–130 (DA), Leu146, and His151.

It belongs to the methyltransferase superfamily. As to quaternary structure, monomer.

It catalyses the reaction 4'-demethylrebeccamycin + S-adenosyl-L-methionine = rebeccamycin + S-adenosyl-L-homocysteine + H(+). Functionally, glycosyl O-methyltransferase that catalyzes the final step in the biosynthesis of rebeccamycin, an indolocarbazole alkaloid that inhibits topoisomerase 1. Has broad substrate specificity and functions as glycosyl O-methyltransferase on a number of rebeccamycin analogs. The protein is Demethylrebeccamycin-D-glucose O-methyltransferase (rebM) of Lentzea aerocolonigenes (Lechevalieria aerocolonigenes).